The primary structure comprises 421 residues: Serine--tRNA ligase (421 aa).

225–227 (TAE) provides a ligand contact to L-serine. ATP-binding positions include 256–258 (RSE) and Val272. Glu279 is an L-serine binding site. 345 to 348 (ETHS) is a binding site for ATP. L-serine is bound at residue Thr380.

The protein belongs to the class-II aminoacyl-tRNA synthetase family. Type-1 seryl-tRNA synthetase subfamily. Homodimer. A single tRNA molecule binds across the dimer.

The protein localises to the cytoplasm. The enzyme catalyses tRNA(Ser) + L-serine + ATP = L-seryl-tRNA(Ser) + AMP + diphosphate + H(+). It carries out the reaction tRNA(Sec) + L-serine + ATP = L-seryl-tRNA(Sec) + AMP + diphosphate + H(+). It functions in the pathway aminoacyl-tRNA biosynthesis; selenocysteinyl-tRNA(Sec) biosynthesis; L-seryl-tRNA(Sec) from L-serine and tRNA(Sec): step 1/1. In terms of biological role, catalyzes the attachment of serine to tRNA(Ser). Is also probably able to aminoacylate tRNA(Sec) with serine, to form the misacylated tRNA L-seryl-tRNA(Sec), which will be further converted into selenocysteinyl-tRNA(Sec). The chain is Serine--tRNA ligase (serS) from Thermus thermophilus (strain ATCC BAA-163 / DSM 7039 / HB27).